The chain runs to 413 residues: Putative competence-damage inducible protein (413 aa).

Belongs to the CinA family.

This chain is Putative competence-damage inducible protein, found in Alkaliphilus oremlandii (strain OhILAs) (Clostridium oremlandii (strain OhILAs)).